Consider the following 260-residue polypeptide: Small ribosomal subunit protein uS3 (260 aa).

The KH type-2 domain maps to L39–Q114. Residues E219–G260 are disordered. Basic and acidic residues-rich tracts occupy residues T227–R243 and Q251–G260.

Belongs to the universal ribosomal protein uS3 family. In terms of assembly, part of the 30S ribosomal subunit. Forms a tight complex with proteins S10 and S14.

Its function is as follows. Binds the lower part of the 30S subunit head. Binds mRNA in the 70S ribosome, positioning it for translation. The protein is Small ribosomal subunit protein uS3 of Trichormus variabilis (strain ATCC 29413 / PCC 7937) (Anabaena variabilis).